Reading from the N-terminus, the 376-residue chain is UDP-N-acetylglucosamine 2-epimerase (376 aa).

Substrate contacts are provided by residues arginine 10, lysine 15, aspartate 95, glutamate 117, histidine 213, glutamine 271, phenylalanine 276, 290-292, glutamate 296, and arginine 313; that span reads SGG.

This sequence belongs to the UDP-N-acetylglucosamine 2-epimerase family. As to quaternary structure, homodimer.

The protein localises to the cytoplasm. The catalysed reaction is UDP-N-acetyl-alpha-D-glucosamine = UDP-N-acetyl-alpha-D-mannosamine. It functions in the pathway bacterial outer membrane biogenesis; enterobacterial common antigen biosynthesis. Functionally, catalyzes the reversible epimerization at C-2 of UDP-N-acetylglucosamine (UDP-GlcNAc) and thereby provides bacteria with UDP-N-acetylmannosamine (UDP-ManNAc), the activated donor of ManNAc residues. This is UDP-N-acetylglucosamine 2-epimerase from Escherichia coli O157:H7.